A 357-amino-acid chain; its full sequence is 5-hydroxytryptamine receptor 5A (357 aa).

Topologically, residues 1 to 36 (MDLPINLTSFSLSTPSTLEPNRSLDTEALRTSQSFL) are extracellular. 2 N-linked (GlcNAc...) asparagine glycosylation sites follow: Asn6 and Asn21. A helical membrane pass occupies residues 37–63 (SAFRVLVLTLLGFLAAATFTWNLLVLA). Topologically, residues 64–76 (TILRVRTFHRVPH) are cytoplasmic. The chain crosses the membrane as a helical span at residues 77–103 (NLVASMAISDVLVAVLVMPLSLVHELS). Topologically, residues 104-114 (GRRWQLGRRLC) are extracellular. Residues Cys114 and Cys192 are joined by a disulfide bond. A helical membrane pass occupies residues 115 to 137 (QLWIACDVLCCTASIWNVTAIAL). Residue Asp121 coordinates serotonin. Over 138 to 155 (DRYWSITRHLEYTLRARK) the chain is Cytoplasmic. Residues 156 to 176 (RVSNVMILLTWALSAVISLAP) traverse the membrane as a helical segment. The Extracellular portion of the chain corresponds to 177–198 (LLFGWGETYSELSEECQVSREP). A helical transmembrane segment spans residues 199–220 (SYTVFSTVGAFYLPLCVVLFVY). Residues 221–287 (WKIYKAAKFR…QKEQRAALMV (67 aa)) lie on the Cytoplasmic side of the membrane. The helical transmembrane segment at 288 to 312 (GILIGVFVLCWFPFFVTELISPLCS) threads the bilayer. Residues 313–314 (WD) lie on the Extracellular side of the membrane. Residues 315-339 (IPALWKSIFLWLGYSNSFFNPLIYT) form a helical membrane-spanning segment. Residues 340-357 (AFNRSYSSAFKVFFSKQQ) lie on the Cytoplasmic side of the membrane.

This sequence belongs to the G-protein coupled receptor 1 family. Central nervous system.

It is found in the cell membrane. Functionally, G-protein coupled receptor for 5-hydroxytryptamine (serotonin), a biogenic hormone that functions as a neurotransmitter, a hormone and a mitogen. Also functions as a receptor for ergot alkaloid derivatives and other psychoactive substances. Ligand binding causes a conformation change that triggers signaling via guanine nucleotide-binding proteins (G proteins) and modulates the activity of downstream effectors. Htr5a is coupled to G(i)/G(o) G alpha proteins and mediates inhibitory neurotransmission: signaling inhibits adenylate cyclase activity and activates a phosphatidylinositol-calcium second messenger system that regulates the release of Ca(2+) ions from intracellular stores. This chain is 5-hydroxytryptamine receptor 5A, found in Rattus norvegicus (Rat).